A 397-amino-acid chain; its full sequence is tRNA-specific 2-thiouridylase MnmA (397 aa).

Residues 19–26 (AMSGGVDS) and leucine 45 contribute to the ATP site. Cysteine 113 serves as the catalytic Nucleophile. A disulfide bridge connects residues cysteine 113 and cysteine 210. Glycine 137 contributes to the ATP binding site. Residues 160-162 (RDQ) are interaction with tRNA. Cysteine 210 serves as the catalytic Cysteine persulfide intermediate.

Belongs to the MnmA/TRMU family.

The protein localises to the cytoplasm. It carries out the reaction S-sulfanyl-L-cysteinyl-[protein] + uridine(34) in tRNA + AH2 + ATP = 2-thiouridine(34) in tRNA + L-cysteinyl-[protein] + A + AMP + diphosphate + H(+). Its function is as follows. Catalyzes the 2-thiolation of uridine at the wobble position (U34) of tRNA, leading to the formation of s(2)U34. The sequence is that of tRNA-specific 2-thiouridylase MnmA from Rhodopseudomonas palustris (strain ATCC BAA-98 / CGA009).